Reading from the N-terminus, the 441-residue chain is Histidine--tRNA ligase (441 aa).

The protein belongs to the class-II aminoacyl-tRNA synthetase family. As to quaternary structure, homodimer.

The protein resides in the cytoplasm. The catalysed reaction is tRNA(His) + L-histidine + ATP = L-histidyl-tRNA(His) + AMP + diphosphate + H(+). This chain is Histidine--tRNA ligase, found in Koribacter versatilis (strain Ellin345).